Consider the following 138-residue polypeptide: Sec-independent protein translocase protein TatB (138 aa).

A helical transmembrane segment spans residues 1-21 (MFDIGFSELLLIAVVALVVLG). The tract at residues 116-138 (VHHVHVPPPSTSTHGNNGQEKSQ) is disordered. Residues 126–138 (TSTHGNNGQEKSQ) are compositionally biased toward polar residues.

This sequence belongs to the TatB family. The Tat system comprises two distinct complexes: a TatABC complex, containing multiple copies of TatA, TatB and TatC subunits, and a separate TatA complex, containing only TatA subunits. Substrates initially bind to the TatABC complex, which probably triggers association of the separate TatA complex to form the active translocon.

It is found in the cell inner membrane. Part of the twin-arginine translocation (Tat) system that transports large folded proteins containing a characteristic twin-arginine motif in their signal peptide across membranes. Together with TatC, TatB is part of a receptor directly interacting with Tat signal peptides. TatB may form an oligomeric binding site that transiently accommodates folded Tat precursor proteins before their translocation. The sequence is that of Sec-independent protein translocase protein TatB from Xylella fastidiosa (strain Temecula1 / ATCC 700964).